The primary structure comprises 104 residues: Large ribosomal subunit protein uL23 (104 aa).

Belongs to the universal ribosomal protein uL23 family. In terms of assembly, part of the 50S ribosomal subunit. Contacts protein L29, and trigger factor when it is bound to the ribosome.

One of the early assembly proteins it binds 23S rRNA. One of the proteins that surrounds the polypeptide exit tunnel on the outside of the ribosome. Forms the main docking site for trigger factor binding to the ribosome. This is Large ribosomal subunit protein uL23 from Polynucleobacter asymbioticus (strain DSM 18221 / CIP 109841 / QLW-P1DMWA-1) (Polynucleobacter necessarius subsp. asymbioticus).